A 339-amino-acid chain; its full sequence is MSNNNKYYDKSFSPLGYVANGQKGVMRSINWNVINDPKDLEVWTRVTQNFWLPEKIPVSNDLKSWNELTPEWKQLVTRTFTGLTLLDTIQCTLGDIAQIPNSLTDHEQFVYANFSFMVGVHARSYGTIFSTLNTSDEIEEAHEWVINNEKLQARAKFLVPYYTSDDPLKSKIAAALMPGFLLYGGFYLPFYLAARGKLPNTSDIIRLILRDKVIHNYYSGYKYRLKVQKLPKEKQEEYKKFVFEILYKLIELEKDFLRELYDGFGLADEAIAFSLYNAGKFLQNCGYESPFTPEETKISPEVFAQLSARADENHDFFSGNGSSYIMGVTEETQDDDWEF.

Asp-87 and His-121 together coordinate Fe cation. Tyr-125 is a catalytic residue. Fe cation is bound at residue His-215.

This sequence belongs to the ribonucleoside diphosphate reductase small chain family. Tetramer of two alpha and two beta subunits. Fe cation serves as cofactor.

The enzyme catalyses a 2'-deoxyribonucleoside 5'-diphosphate + [thioredoxin]-disulfide + H2O = a ribonucleoside 5'-diphosphate + [thioredoxin]-dithiol. Its function is as follows. Provides the precursors necessary for DNA synthesis. Catalyzes the biosynthesis of deoxyribonucleotides from the corresponding ribonucleotides. The protein is Ribonucleoside-diphosphate reductase subunit beta (nrdF) of Mycoplasmoides gallisepticum (strain R(low / passage 15 / clone 2)) (Mycoplasma gallisepticum).